Consider the following 904-residue polypeptide: Dynamin-like protein C (904 aa).

Residues 44–102 (IAEAMALKMHEEEKKKREEKKRKRDNEELLSKQVRTKLENERKKLDDSESINASTNQEL) adopt a coiled-coil conformation. Positions 53–93 (HEEEKKKREEKKRKRDNEELLSKQVRTKLENERKKLDDSES) are disordered. Positions 67 to 90 (RDNEELLSKQVRTKLENERKKLDD) are enriched in basic and acidic residues. Residues 119–441 (SFDTPELVVV…HEKYQQNLLP (323 aa)) form the Dynamin-type G domain. The segment at 129–136 (GMQSDGKS) is G1 motif. 129–136 (GMQSDGKS) provides a ligand contact to GTP. The G2 motif stretch occupies residues 155 to 157 (GTR). Residues 169–227 (SKQQPSCRFKKEDYSNSYGGSSSSTSTTSGNSNHNTDKQQNVSSSQGGGGGSNNLNEDK) are disordered. The span at 183–213 (SNSYGGSSSSTSTTSGNSNHNTDKQQNVSSS) shows a compositional bias: low complexity. Residues 278–281 (DTPG) are G3 motif. Residues 278-282 (DTPGF) and 343-346 (TKFD) each bind GTP. Residues 343–346 (TKFD) form a G4 motif region. A G5 motif region spans residues 378-381 (LPLK). A coiled-coil region spans residues 781 to 811 (EMFQLGLKELENKLHKLEFQLIDCKKNRDKF). 2 disordered regions span residues 821–840 (SLNQ…ASSS) and 853–904 (NGKF…FDQN). Positions 853–876 (NGKFSTPDKNSLTMSPFTSPFTQS) are enriched in polar residues. Over residues 877-891 (NYHQHNNNNYQINQQ) the composition is skewed to low complexity.

This sequence belongs to the TRAFAC class dynamin-like GTPase superfamily. Dynamin/Fzo/YdjA family.

Its subcellular location is the cytoplasm. The catalysed reaction is GTP + H2O = GDP + phosphate + H(+). Functionally, involved in cytokinesis. May hydrolyze GTP. In Dictyostelium discoideum (Social amoeba), this protein is Dynamin-like protein C (dlpC).